The primary structure comprises 578 residues: Aspartate--tRNA ligase (578 aa).

Residue Glu-169 participates in L-aspartate binding. Positions 191–194 are aspartate; that stretch reads QTFK. Arg-213 contributes to the L-aspartate binding site. Residues 213-215 and Gln-222 contribute to the ATP site; that span reads RDE. His-440 provides a ligand contact to L-aspartate. Glu-474 contacts ATP. Arg-481 is a binding site for L-aspartate. Position 526–529 (526–529) interacts with ATP; the sequence is GLDR.

Belongs to the class-II aminoacyl-tRNA synthetase family. Type 1 subfamily. As to quaternary structure, homodimer.

The protein resides in the cytoplasm. It catalyses the reaction tRNA(Asp) + L-aspartate + ATP = L-aspartyl-tRNA(Asp) + AMP + diphosphate. Functionally, catalyzes the attachment of L-aspartate to tRNA(Asp) in a two-step reaction: L-aspartate is first activated by ATP to form Asp-AMP and then transferred to the acceptor end of tRNA(Asp). This is Aspartate--tRNA ligase from Ureaplasma parvum serovar 3 (strain ATCC 700970).